Reading from the N-terminus, the 518-residue chain is Putative Rieske 2Fe-2S iron-sulfur protein MSMEG_6410/MSMEI_6242 (518 aa).

An Isoglutamyl lysine isopeptide (Lys-Gln) (interchain with Q-Cter in protein Pup) cross-link involves residue K375. Residues 431 to 518 (LYTFFKCLTD…KGHELRCQKL (88 aa)) enclose the Rieske domain. [2Fe-2S] cluster-binding residues include C471, H473, C491, and H494.

Requires [2Fe-2S] cluster as cofactor.

This is Putative Rieske 2Fe-2S iron-sulfur protein MSMEG_6410/MSMEI_6242 from Mycolicibacterium smegmatis (strain ATCC 700084 / mc(2)155) (Mycobacterium smegmatis).